The primary structure comprises 529 residues: GMP synthase [glutamine-hydrolyzing] (529 aa).

Residues 17–206 form the Glutamine amidotransferase type-1 domain; the sequence is TILVLDFGSQ…AIDICQASNN (190 aa). The active-site Nucleophile is the Cys-93. Residues His-180 and Glu-182 contribute to the active site. The GMPS ATP-PPase domain occupies 207-404; that stretch reads WTMENFIDTE…MGVPHDLVWR (198 aa). Residue 235–241 coordinates ATP; sequence SGGVDST. 4 residues coordinate XMP: Arg-308, Asp-466, Lys-521, and Glu-527.

Homodimer. Requires Mg(2+) as cofactor.

The protein localises to the cytoplasm. The protein resides in the cytosol. The catalysed reaction is XMP + L-glutamine + ATP + H2O = GMP + L-glutamate + AMP + diphosphate + 2 H(+). It participates in purine metabolism; GMP biosynthesis; GMP from XMP (L-Gln route): step 1/1. Catalyzes the conversion of xanthine monophosphate (XMP) to GMP in the presence of glutamine and ATP through an adenyl-XMP intermediate. This chain is GMP synthase [glutamine-hydrolyzing] (GUA1), found in Debaryomyces hansenii (strain ATCC 36239 / CBS 767 / BCRC 21394 / JCM 1990 / NBRC 0083 / IGC 2968) (Yeast).